Reading from the N-terminus, the 409-residue chain is Glycosyltransferase GtfE (409 aa).

It belongs to the glycosyltransferase 28 family.

The protein operates within antibiotic biosynthesis; vancomycin biosynthesis. D-glucosyltransferase that acts on the aglycone core, transferring D-glucose to the phenolic hydroxyl of OH-Phegly(4) to form a devancoaminyl-vancomycin (DVV) intermediate in the biosynthesis of glycopeptide antibiotic vancomycin. Also able to glycosylate A47934, an antibiotic with a teicoplanin-like heptapeptide, but lacking sugar residues. This chain is Glycosyltransferase GtfE (gtfE), found in Amycolatopsis orientalis (Nocardia orientalis).